Consider the following 31-residue polypeptide: Morintide mO3 (31 aa).

Residues 1 to 30 (NRLCCSQYGFCGTTSEYCSRANGCQSNCWG) form the Chitin-binding type-1 domain. 2 cysteine pairs are disulfide-bonded: cysteine 4–cysteine 18 and cysteine 24–cysteine 28.

Seeds (at protein level).

Its function is as follows. Chitin-binding protein which functions in defense against chitin-containing fungal pathogens. The chain is Morintide mO3 from Moringa oleifera (Horseradish tree).